The sequence spans 725 residues: ABC transporter G family member 7 (725 aa).

A helical transmembrane segment spans residues 12 to 34; sequence VVSGIGGNGVGGALAAVAAALLV. The ABC transporter domain occupies 70-316; it reads IRWRNITCSL…YFGNFGFLCP (247 aa). 108-115 serves as a coordination point for ATP; that stretch reads GPSGSGKT. One can recognise an ABC transmembrane type-2 domain in the interval 392-603; it reads RQFFLLLKRA…AFQGLCINEF (212 aa). Transmembrane regions (helical) follow at residues 446–466, 493–513, 528–548, and 553–573; these read LLQVAAINTAMAALTKTVGVF, IAEIPIGAAFPLMFGAVLYPM, GIVTVESFAASAMGLTVGAMV, and AAMAVGPSLMTVFIVFGGYYV. The segment at 676 to 725 is disordered; the sequence is NSGVQLDKAEVDQTEKPEDDDINQPLDDQNQTSDSDDELDEIRPFVLEGL. Basic and acidic residues predominate over residues 682-691; that stretch reads DKAEVDQTEK.

Belongs to the ABC transporter superfamily. ABCG family. Eye pigment precursor importer (TC 3.A.1.204) subfamily.

Its subcellular location is the membrane. The chain is ABC transporter G family member 7 (ABCG7) from Arabidopsis thaliana (Mouse-ear cress).